We begin with the raw amino-acid sequence, 751 residues long: NAD(P)H-quinone oxidoreductase subunit 5, chloroplastic (751 aa).

16 consecutive transmembrane segments (helical) span residues 9 to 29 (WIIP…LIIF), 40 to 60 (WAFP…KLSI), 89 to 109 (VDPL…LVLI), 125 to 145 (FAYL…SNFI), 147 to 167 (IYIF…FWFT), 185 to 205 (GDFG…SFEF), 219 to 239 (NEVH…GAVA), 258 to 278 (TPIS…FLVA), 280 to 300 (LFPL…VGII), 327 to 347 (LGYM…FHLI), 354 to 374 (ALLF…VGYS), 396 to 416 (TAFL…CFWS), 425 to 445 (WLYS…TAFY), 543 to 563 (LFPL…GIPF), 599 to 619 (FLTN…LASF), and 719 to 739 (ISSY…IYYF).

It belongs to the complex I subunit 5 family. As to quaternary structure, NDH is composed of at least 16 different subunits, 5 of which are encoded in the nucleus.

It is found in the plastid. It localises to the chloroplast thylakoid membrane. The enzyme catalyses a plastoquinone + NADH + (n+1) H(+)(in) = a plastoquinol + NAD(+) + n H(+)(out). It carries out the reaction a plastoquinone + NADPH + (n+1) H(+)(in) = a plastoquinol + NADP(+) + n H(+)(out). NDH shuttles electrons from NAD(P)H:plastoquinone, via FMN and iron-sulfur (Fe-S) centers, to quinones in the photosynthetic chain and possibly in a chloroplast respiratory chain. The immediate electron acceptor for the enzyme in this species is believed to be plastoquinone. Couples the redox reaction to proton translocation, and thus conserves the redox energy in a proton gradient. This is NAD(P)H-quinone oxidoreductase subunit 5, chloroplastic (ndhF) from Fagopyrum esculentum subsp. ancestrale (Wild buckwheat).